We begin with the raw amino-acid sequence, 374 residues long: Alcohol dehydrogenase 1 (374 aa).

An N-acetylserine modification is found at Ser-1. Residues Cys-46, His-67, Cys-97, Cys-100, Cys-103, Cys-111, and Cys-174 each coordinate Zn(2+). NAD(+)-binding positions include 199-204 (GLGGVG), Asp-223, Lys-228, 292-294 (VGV), and Arg-369.

It belongs to the zinc-containing alcohol dehydrogenase family. Class-I subfamily. Requires Zn(2+) as cofactor.

The protein resides in the cytoplasm. The enzyme catalyses a primary alcohol + NAD(+) = an aldehyde + NADH + H(+). It carries out the reaction a secondary alcohol + NAD(+) = a ketone + NADH + H(+). The polypeptide is Alcohol dehydrogenase 1 (Alligator mississippiensis (American alligator)).